Here is a 734-residue protein sequence, read N- to C-terminus: Diacylglycerol kinase alpha (734 aa).

EF-hand domains lie at 109–144 and 154–189; these read RPED…MMRM and ELRP…TVPL. Ca(2+)-binding residues include D122, D124, N126, E133, D167, D169, S171, S173, and E178. 2 Phorbol-ester/DAG-type zinc fingers span residues 204 to 252 and 268 to 318; these read QHMW…ALPC and THVW…GHEC. The segment at 358–505 is necessary and sufficient for the diacylglycerol kinase activity; sequence NLSTSEALRI…MDRWSVEVIP (148 aa). In terms of domain architecture, DAGKc spans 371–505; it reads SNTHPLLVFV…MDRWSVEVIP (135 aa). Residue K483 is modified to N6-acetyllysine.

It belongs to the eukaryotic diacylglycerol kinase family. Monomer.

It is found in the cytoplasm. The protein localises to the cytosol. It carries out the reaction a 1,2-diacyl-sn-glycerol + ATP = a 1,2-diacyl-sn-glycero-3-phosphate + ADP + H(+). The catalysed reaction is a 1-O-alkyl-sn-glycerol + ATP = a 1-O-alkyl-sn-glycero-3-phosphate + ADP + H(+). It catalyses the reaction 1-O-alkyl-2-acyl-sn-glycerol + ATP = 1-O-alkyl-2-acyl-sn-glycero-3-phosphate + ADP + H(+). The enzyme catalyses 1,2-dihexadecanoyl-sn-glycerol + ATP = 1,2-dihexadecanoyl-sn-glycero-3-phosphate + ADP + H(+). It carries out the reaction 1-hexadecanoyl-2-(9Z-octadecenoyl)-sn-glycerol + ATP = 1-hexadecanoyl-2-(9Z-octadecenoyl)-sn-glycero-3-phosphate + ADP + H(+). The catalysed reaction is 2-(9Z-octadecenoyl)-glycerol + ATP = 2-(9Z-octadecenoyl)-sn-glycero-3-phosphate + ADP + H(+). It catalyses the reaction 1,2-di-(9Z-octadecenoyl)-sn-glycerol + ATP = 1,2-di-(9Z-octadecenoyl)-sn-glycero-3-phosphate + ADP + H(+). The enzyme catalyses 1-octadecanoyl-2-(5Z,8Z,11Z,14Z-eicosatetraenoyl)-sn-glycerol + ATP = 1-octadecanoyl-2-(5Z,8Z,11Z,14Z-eicosatetraenoyl)-sn-glycero-3-phosphate + ADP + H(+). It carries out the reaction 1,2-didecanoyl-sn-glycerol + ATP = 1,2-didecanoyl-sn-glycero-3-phosphate + ADP + H(+). The catalysed reaction is 1-O-hexadecyl-2-acetyl-sn-glycerol + ATP = 1-O-hexadecyl-2-acetyl-sn-glycero-3-phosphate + ADP + H(+). It catalyses the reaction 1-O-hexadecyl-2-(5Z,8Z,11Z,14Z-eicosatetraenoyl)-sn-glycerol + ATP = 1-O-hexadecyl-2-(5Z,8Z,11Z,14Z-eicosatetraenoyl)-sn-glycero-3-phosphate + ADP + H(+). The enzyme catalyses 1-O-hexadecyl-2-(9Z-octadecenoyl)-sn-glycerol + ATP = 1-O-hexadecyl-2-(9Z-octadecenoyl)-sn-glycero-3-phosphate + ADP + H(+). It carries out the reaction 1-O-hexadecyl-sn-glycerol + ATP = 1-O-hexadecyl-sn-glycero-3-phosphate + ADP + H(+). It participates in lipid metabolism; glycerolipid metabolism. Stimulated by calcium and phosphatidylserine. Its function is as follows. Diacylglycerol kinase that converts diacylglycerol/DAG into phosphatidic acid/phosphatidate/PA and regulates the respective levels of these two bioactive lipids. Thereby, acts as a central switch between the signaling pathways activated by these second messengers with different cellular targets and opposite effects in numerous biological processes. Also plays an important role in the biosynthesis of complex lipids. Can also phosphorylate 1-alkyl-2-acylglycerol in vitro as efficiently as diacylglycerol provided it contains an arachidonoyl group. Also involved in the production of alkyl-lysophosphatidic acid, another bioactive lipid, through the phosphorylation of 1-alkyl-2-acetyl glycerol. This is Diacylglycerol kinase alpha (DGKA) from Sus scrofa (Pig).